We begin with the raw amino-acid sequence, 503 residues long: MIEKDKRTIAFIHPDLGIGGAERLVVDAALGLQQQGHSVIIYTSHCDKSHCFEEVKNGQLKVEVYGDFLPTNFLGRFFIVFATIRQLYLVIQLILQKKVNAYQLIIIDQLSTCIPLLHIFSSATLMFYCHFPDQLLAQRAGLLKKIYRLPFDLIEQFSVSAADTVVVNSNFTKNTFHQTFKYLSNDPDVIYPCVDLSTIEIEDIDKKFFKTVFNEGDRFYLSINRFEKKKDVALAIKAFALSEDQINDNVKLVICGGYDERVAENVEYLKELQSLADEYELSHTTIYYQEIKRVSDLESFKTNNSKIIFLTSISSSLKELLLERTEMLLYTPAYEHFGIVPLEAMKLGKPVLAVNNGGPLETIKSYVAGENESSATGWLKPAVPIQWATAIDESRKILQNGSVNFERNGPLRVKKYFSREAMTQSFEENVEKVIWKEKKYYPWEIFGISFSNFILHMAFIKILPNNPWPFLFMATFMVLYFKNYLWGIYWAFVFALSYPYEEI.

2 helical membrane-spanning segments follow: residues 64 to 84 (VYGD…FATI) and 112 to 132 (TCIP…CHFP). N-linked (GlcNAc...) asparagine glycosylation is found at asparagine 170, asparagine 303, asparagine 371, and asparagine 400. Residues 443–463 (WEIFGISFSNFILHMAFIKIL) traverse the membrane as a helical segment.

The protein belongs to the glycosyltransferase group 1 family. Glycosyltransferase 4 subfamily. As to quaternary structure, interacts with ALG1.

It is found in the endoplasmic reticulum membrane. The enzyme catalyses a beta-D-Man-(1-&gt;4)-beta-D-GlcNAc-(1-&gt;4)-alpha-D-GlcNAc-diphospho-di-trans,poly-cis-dolichol + GDP-alpha-D-mannose = an alpha-D-Man-(1-&gt;3)-beta-D-Man-(1-&gt;4)-beta-D-GlcNAc-(1-&gt;4)-alpha-D-GlcNAc-diphospho-di-trans,poly-cis-dolichol + GDP + H(+). It carries out the reaction an alpha-D-Man-(1-&gt;3)-beta-D-Man-(1-&gt;4)-beta-D-GlcNAc-(1-&gt;4)-alpha-D-GlcNAc-diphospho-di-trans,poly-cis-dolichol + GDP-alpha-D-mannose = an alpha-D-Man-(1-&gt;3)-[alpha-D-Man-(1-&gt;6)]-beta-D-Man-(1-&gt;4)-beta-D-GlcNAc-(1-&gt;4)-alpha-D-GlcNAc-diphospho-di-trans,poly-cis-dolichol + GDP + H(+). Its pathway is protein modification; protein glycosylation. Mannosylates Man(2)GlcNAc(2)-dolichol diphosphate and Man(1)GlcNAc(2)-dolichol diphosphate to form Man(3)GlcNAc(2)-dolichol diphosphate. This is Alpha-1,3/1,6-mannosyltransferase ALG2 (ALG2) from Saccharomyces cerevisiae (strain ATCC 204508 / S288c) (Baker's yeast).